The following is a 249-amino-acid chain: MASASGAMAKHEQILVLDPPTDLKFKGPFTDVVTTNLKLRNPSDRKVCFKVKTTAPRRYCVRPNSGIIDPGSTVTVSVMLQPFDYDPNEKSKHKFMVQTIFAPPNTSDMEAVWKEAKPDELMDSKLRCVFEMPNENDKLNDMEPSKAVPLNASKQDGPMPKPHSVSLNDTETRKLMEECKRLQGEMMKLSEENRHLRDEGLRLRKVAHSDKPGSTSTASFRDNVTSPLPSLLVVIAAIFIGFFLGKFIL.

At A2 the chain carries N-acetylalanine. Over 2–227 (ASASGAMAKH…ASFRDNVTSP (226 aa)) the chain is Cytoplasmic. Residues 14 to 131 (ILVLDPPTDL…MDSKLRCVFE (118 aa)) form the MSP domain. Residues 50-53 (KVKT) are phosphorylated FFAT motif binding. K125 carries the N6-acetyllysine modification. A compositionally biased stretch (basic and acidic residues) spans 135-144 (ENDKLNDMEP). A disordered region spans residues 135 to 167 (ENDKLNDMEPSKAVPLNASKQDGPMPKPHSVSL). The residue at position 166 (S166) is a Phosphoserine. Positions 169 to 205 (DTETRKLMEECKRLQGEMMKLSEENRHLRDEGLRLRK) form a coiled coil. Phosphothreonine is present on T170. 3 positions are modified to phosphoserine: S214, S216, and S219. A helical; Anchor for type IV membrane protein transmembrane segment spans residues 228 to 248 (LPSLLVVIAAIFIGFFLGKFI).

It belongs to the VAMP-associated protein (VAP) (TC 9.B.17) family. In terms of assembly, homodimer; disulfide-linked. Heterodimer with VAPB. Interacts with VAMP1, VAMP2, STX1A, BET1, SEC22C and with the C-terminal domain of OCLN. Interacts (via MSP domain) with OSBPL1A (via FFAT motif). Interacts (via MSP domain) with ZFYVE27; may retain ZFYVE27 in the endoplasmic reticulum and regulate its function in cell projections formation. Interacts with OSBP. Interacts (via C-terminus) with RSAD2/viperin (via C-terminus). Interacts with IFITM3. Interacts with OSBPL3 (phosphorylated form). Interacts with KIF5A in a ZFYVE27-dependent manner. Interacts (via MSP domain) with STARD3 (via phosphorylated FFAT motif); this interaction recruits VAPA to the endosome. Interacts with STARD3NL (via FFAT motif). Interacts with CERT1. Interacts with PLEKHA3 and SACM1L to form a ternary complex. Interacts with VPS13A (via FFAT motif). Interacts with RB1CC1 (via phosphorylated FFAT motif), MIGA2 (via phosphorylated FFAT motif), RMDN3 (via phosphorylated FFAT motif), KCNB1 (via phosphorylated FFAT motif) and KCNB2 (via phosphorylated FFAT motif). Interacts (via MSP domain) with WDR44 (via FFAT-like motif); the interactions connect the endoplasmic reticulum (ER) with the endosomal tubule. (Microbial infection) Interacts with HCV protein NS5A and NS5B. In terms of tissue distribution, ubiquitous.

It is found in the endoplasmic reticulum membrane. Its subcellular location is the cell membrane. The protein localises to the cell junction. It localises to the tight junction. The protein resides in the nucleus membrane. Its function is as follows. Endoplasmic reticulum (ER)-anchored protein that mediates the formation of contact sites between the ER and endosomes via interaction with FFAT motif-containing proteins such as STARD3 or WDR44. STARD3-VAPA interaction enables cholesterol transfer from the ER to endosomes. Via interaction with WDR44 participates in neosynthesized protein export. In addition, recruited to the plasma membrane through OSBPL3 binding. The OSBPL3-VAPA complex stimulates RRAS signaling which in turn attenuates integrin beta-1 (ITGB1) activation at the cell surface. With OSBPL3, may regulate ER morphology. May play a role in vesicle trafficking. The chain is Vesicle-associated membrane protein-associated protein A from Homo sapiens (Human).